The primary structure comprises 199 residues: Small ribosomal subunit protein uS4 (199 aa).

The 64-residue stretch at 91–154 folds into the S4 RNA-binding domain; the sequence is SRLDNVVYRL…KDLIIVKEAL (64 aa).

Belongs to the universal ribosomal protein uS4 family. In terms of assembly, part of the 30S ribosomal subunit. Contacts protein S5. The interaction surface between S4 and S5 is involved in control of translational fidelity.

In terms of biological role, one of the primary rRNA binding proteins, it binds directly to 16S rRNA where it nucleates assembly of the body of the 30S subunit. Its function is as follows. With S5 and S12 plays an important role in translational accuracy. The polypeptide is Small ribosomal subunit protein uS4 (Phytoplasma mali (strain AT)).